A 461-amino-acid chain; its full sequence is Smoothelin-like protein 2 (461 aa).

Positions 55 to 88 (PLARTVADLQRDNQRLQAQLERLTRQVEALGLAS) form a coiled coil. Disordered stretches follow at residues 87-193 (ASGM…LRLP) and 227-248 (LNPSPSEVITPWTPSPSEKNSS). Over residues 94-107 (PGTPGTPSPPPAPG) the composition is skewed to pro residues. Thr96 carries the post-translational modification Phosphothreonine. A phosphoserine mark is found at Ser101, Ser129, and Ser134. The span at 134–147 (SLDHDEASESEMRK) shows a compositional bias: basic and acidic residues. Phosphoserine occurs at positions 256 and 269. Positions 260 to 307 (AVTASKHSNSPPLVTPPQSPVSPQPPAITQVHRQGERRRELVRSQTLP) are disordered. Over residues 272–285 (LVTPPQSPVSPQPP) the composition is skewed to pro residues. Residue Thr274 is modified to Phosphothreonine. Phosphoserine is present on Ser278. Positions 292–301 (RQGERRRELV) are enriched in basic and acidic residues. Ser344 is subject to Phosphoserine. Positions 351-458 (SSIKQILLEW…YVQSLYNHLR (108 aa)) constitute a Calponin-homology (CH) domain.

It belongs to the smoothelin family.

This is Smoothelin-like protein 2 (SMTNL2) from Homo sapiens (Human).